Reading from the N-terminus, the 176-residue chain is Sec-independent protein translocase protein TatB (176 aa).

Residues 1–21 (MLDLGLSKMALIGVVALVVLG) traverse the membrane as a helical segment. Positions 155 to 176 (QSGAARVARHQPASLRRPTRFL) are disordered.

It belongs to the TatB family. In terms of assembly, the Tat system comprises two distinct complexes: a TatABC complex, containing multiple copies of TatA, TatB and TatC subunits, and a separate TatA complex, containing only TatA subunits. Substrates initially bind to the TatABC complex, which probably triggers association of the separate TatA complex to form the active translocon.

It localises to the cell inner membrane. In terms of biological role, part of the twin-arginine translocation (Tat) system that transports large folded proteins containing a characteristic twin-arginine motif in their signal peptide across membranes. Together with TatC, TatB is part of a receptor directly interacting with Tat signal peptides. TatB may form an oligomeric binding site that transiently accommodates folded Tat precursor proteins before their translocation. The chain is Sec-independent protein translocase protein TatB from Burkholderia ambifaria (strain ATCC BAA-244 / DSM 16087 / CCUG 44356 / LMG 19182 / AMMD) (Burkholderia cepacia (strain AMMD)).